Reading from the N-terminus, the 1044-residue chain is Isoleucine--tRNA ligase (1044 aa).

Residues 48 to 58 carry the 'HIGH' region motif; sequence PFATGLPHFGH. Positions 594-598 match the 'KMSKS' region motif; the sequence is KMSKS. K597 is a binding site for ATP.

Belongs to the class-I aminoacyl-tRNA synthetase family. IleS type 2 subfamily. As to quaternary structure, monomer. Zn(2+) serves as cofactor.

It is found in the cytoplasm. The catalysed reaction is tRNA(Ile) + L-isoleucine + ATP = L-isoleucyl-tRNA(Ile) + AMP + diphosphate. Its function is as follows. Catalyzes the attachment of isoleucine to tRNA(Ile). As IleRS can inadvertently accommodate and process structurally similar amino acids such as valine, to avoid such errors it has two additional distinct tRNA(Ile)-dependent editing activities. One activity is designated as 'pretransfer' editing and involves the hydrolysis of activated Val-AMP. The other activity is designated 'posttransfer' editing and involves deacylation of mischarged Val-tRNA(Ile). This chain is Isoleucine--tRNA ligase, found in Borrelia recurrentis (strain A1).